Consider the following 281-residue polypeptide: MILTKAQYDEIAQCLVSVPPTRQSLRKLKQRFPSQSQATLLSIFSQEYQKHIKRTHAKHHTSEAIESYYQRYLNGVRKNGAAPVLLELANEVDYAPSLMARIILERFLQKHEEAPPSKSVINSMLRDPSQIPDGVLANQVYQCIVNDCCYGPLVDCIKHAIGHEHEVLLRDLLLEKNLSFLDEDQLRARGYDKTPDFILQVPVAVEGHIIHWIESKASFGDECSHHAYLHDQFWSYWNRFGPGLVIYWYGFIQELDCNRERGILLHACFPTDIVTLCHSVA.

It is found in the nucleus. The protein localises to the cytoplasm. In terms of biological role, plays a role in erythroid cell differentiation. The protein is CDAN1-interacting nuclease 1 (CDIN1) of Bos taurus (Bovine).